The chain runs to 569 residues: Arginine--tRNA ligase (569 aa).

A 'HIGH' region motif is present at residues Ala-123–His-133.

This sequence belongs to the class-I aminoacyl-tRNA synthetase family.

The protein localises to the cytoplasm. It carries out the reaction tRNA(Arg) + L-arginine + ATP = L-arginyl-tRNA(Arg) + AMP + diphosphate. In Methanosarcina barkeri (strain Fusaro / DSM 804), this protein is Arginine--tRNA ligase.